The following is a 203-amino-acid chain: Small ribosomal subunit protein uS7B (203 aa).

It belongs to the universal ribosomal protein uS7 family. Component of the small ribosomal subunit (SSU). Mature yeast ribosomes consist of a small (40S) and a large (60S) subunit. The 40S small subunit contains 1 molecule of ribosomal RNA (18S rRNA) and at least 33 different proteins. The large 60S subunit contains 3 rRNA molecules (25S, 5.8S and 5S rRNA) and at least 46 different proteins.

It is found in the cytoplasm. In terms of biological role, component of the ribosome, a large ribonucleoprotein complex responsible for the synthesis of proteins in the cell. The small ribosomal subunit (SSU) binds messenger RNAs (mRNAs) and translates the encoded message by selecting cognate aminoacyl-transfer RNA (tRNA) molecules. The large subunit (LSU) contains the ribosomal catalytic site termed the peptidyl transferase center (PTC), which catalyzes the formation of peptide bonds, thereby polymerizing the amino acids delivered by tRNAs into a polypeptide chain. The nascent polypeptides leave the ribosome through a tunnel in the LSU and interact with protein factors that function in enzymatic processing, targeting, and the membrane insertion of nascent chains at the exit of the ribosomal tunnel. In Schizosaccharomyces pombe (strain 972 / ATCC 24843) (Fission yeast), this protein is Small ribosomal subunit protein uS7B (rps502).